Consider the following 120-residue polypeptide: Large ribosomal subunit protein uL18 (120 aa).

The protein belongs to the universal ribosomal protein uL18 family. In terms of assembly, part of the 50S ribosomal subunit; part of the 5S rRNA/L5/L18 subcomplex. In B.stearothermophilus only 2 proteins, L5 and L18 have been shown to be part of this subcomplex, unlike the case in E.coli and T.thermophilus where L25 (TL5) is also found. In terms of processing, the protein, when overexpressed in E.coli, contains a phosphoserine, which is required for the protein to bind to 5S rRNA. It has been suggested, based solely on amino acid conservation, that this occurs on Ser-57.

Functionally, this is one of the proteins that bind and probably mediate the attachment of the 5S RNA into the large ribosomal subunit, where it forms part of the central protuberance. The chain is Large ribosomal subunit protein uL18 (rplR) from Geobacillus stearothermophilus (Bacillus stearothermophilus).